Reading from the N-terminus, the 621-residue chain is Pentatricopeptide repeat-containing protein At3g48250, chloroplastic (621 aa).

The transit peptide at 1-67 (MYRSMAILSS…SKPDSMLQLV (67 aa)) directs the protein to the chloroplast. PPR repeat units lie at residues 122–156 (STPLYSIMLRILVQQRSMKRFWMTLREMKQGGFYL), 157–194 (DEDTYKTIYGELSKEKSKADAVAVAHFYERMLKENAMS), 262–296 (STVTYNAALRVLARPNSVAEFWSVVDEMKTAGYDM), 297–331 (DLDTYIKVSRQFQKSRMMAETVKLYEYMMDGPFKP), 332–368 (SIQDCSLLLRYLSGSPNPDLDLVFRVSRKYESTGKSL), 369–403 (SKAVYDGIHRSLTSVGRFDEAEEITKAMRNAGYEP), 404–438 (DNITYSQLVFGLCKAKRLEEARGVLDQMEAQGCFP), 439–473 (DIKTWTILIQGHCKNNELDKALACFANMLEKGFDI), 474–509 (DSNLLDVLIDGFVIHNKFEGASIFLMEMVKNANVKP), and 510–544 (WQSTYKLLIDKLLKIKKSEEALDLLQMMKKQNYPA).

Belongs to the PPR family. P subfamily.

It is found in the plastid. Its subcellular location is the chloroplast. In Arabidopsis thaliana (Mouse-ear cress), this protein is Pentatricopeptide repeat-containing protein At3g48250, chloroplastic.